An 837-amino-acid polypeptide reads, in one-letter code: MSDTDLNATRRDVLKSGAVAAVGLSGGGLLSTLQEADDSDTAGDAVTSFLGEDQVVKTACSPNCRGKCPLDVFVRDGQIKKVEQQVPAAKTFKRGCTLGMTHLQRVYNADRLKYPMKRTSWSPDDPQPDQRGADAQFERIAWDDALDLVADGIQRAKREYGPRSLLWHSGSGDGGITGYRRLKELVGGLQDDFTYGIDTNVGQGFNRVTGEGGVFMPPTNTADDWVNAETIIIWGSDIFASQFQMDAEWILDAKRNGAKLVVVDPVYTNTAEKADLWLPIKPGKDTHLALAMMQYIFEHDHYDEAFLRSRTNAPALVRADDGTLLDPASVTATPPEDGIVVFNTETGSPEVVPAETNGPFALFGEWTIDGTTVHTGLTALREQASSYPPQAVADTAGLAAADIETAADWLATRGPGGIMPSYGVGRYLYGHVFGQTYATLLALTGDYGRHGNIHAQHPSYDGSYLETGDWNDPDGAAGVDTYGYNRVLDLLANGDPVQTKFMYGMNSNMLGNQFPERDRWLDAMSNLDTVVWADIYHTPTTRQADIILPAAHWFETEDLLTTYTHPNLSYRTKAHDPLWEARDDYYIMAGLAQRLGHGDKFPDDKHDVLDRFVKNDDRLSWDALRETGTVATDETPTVAYTDEFGTESGRITVYDDDAPVEEGPALPDDGVSLEVPKPLEARTADDWAHADEYPLLFMQKHSKWRIHSQWANVPWLREINTEPQLDIHPKDATRRGIDDGEYVRVHNDRGSVVVRAKYNDGIQPGLVNTDQGWWARDFVDGHLQDLISAETAKVGRTFAFYDCRVEVTRAADEHQSNEYTQHNPRGSSGTATDGDSS.

The segment at residues 1-36 (MSDTDLNATRRDVLKSGAVAAVGLSGGGLLSTLQEA) is a signal peptide (tat-type signal). The 58-residue stretch at 53–110 (DQVVKTACSPNCRGKCPLDVFVRDGQIKKVEQQVPAAKTFKRGCTLGMTHLQRVYNAD) folds into the 4Fe-4S Mo/W bis-MGD-type domain. Residues Cys-60, Cys-64, Cys-68, and Cys-96 each contribute to the [4Fe-4S] cluster site. Position 200 (Asn-200) interacts with Mo-bis(molybdopterin guanine dinucleotide). A disordered region spans residues 813 to 837 (EHQSNEYTQHNPRGSSGTATDGDSS). Low complexity predominate over residues 826–837 (GSSGTATDGDSS).

Belongs to the prokaryotic molybdopterin-containing oxidoreductase family. Probable multiprotein complex that likely consists of DmsA, DmsB and DmsC. Mo-bis(molybdopterin guanine dinucleotide) serves as cofactor. Requires [4Fe-4S] cluster as cofactor. Post-translationally, predicted to be exported by the Tat system. The position of the signal peptide cleavage has not been experimentally proven.

It localises to the cell membrane. The catalysed reaction is dimethyl sulfide + a menaquinone + H2O = dimethyl sulfoxide + a menaquinol. In terms of biological role, dimethyl sulfoxide (DMSO) reductase catalyzes the reduction of dimethyl sulfoxide (DMSO) to dimethyl sulfide (DMS) during anaerobic respiration; it can also use trimethylamine N-oxide (TMAO) as terminal electron acceptor. Required for anaerobic respiration on DMSO and TMAO; subunit A is proposed to be catalytically active. The sequence is that of Putative dimethyl sulfoxide reductase catalytic subunit A (dmsA) from Halobacterium salinarum (strain ATCC 700922 / JCM 11081 / NRC-1) (Halobacterium halobium).